The chain runs to 133 residues: Small ribosomal subunit protein uS9 (133 aa).

The tract at residues 94–133 (SADNRKPLKTEGHLSRDPRAKERRKYGLKKARKAPQFSKR) is disordered. The span at 95–113 (ADNRKPLKTEGHLSRDPRA) shows a compositional bias: basic and acidic residues. Over residues 114 to 133 (KERRKYGLKKARKAPQFSKR) the composition is skewed to basic residues.

Belongs to the universal ribosomal protein uS9 family.

In Synechococcus sp. (strain CC9605), this protein is Small ribosomal subunit protein uS9.